The sequence spans 401 residues: Argininosuccinate synthase (401 aa).

ATP contacts are provided by residues 10 to 18 (AYSGGVDTS) and Ala-38. Tyr-89 provides a ligand contact to L-citrulline. ATP is bound at residue Gly-119. Positions 121, 125, and 126 each coordinate L-aspartate. Asn-125 contacts L-citrulline. L-citrulline contacts are provided by Arg-129, Ser-177, Ser-186, Glu-262, and Tyr-274.

It belongs to the argininosuccinate synthase family. Type 1 subfamily. Homotetramer.

It is found in the cytoplasm. The catalysed reaction is L-citrulline + L-aspartate + ATP = 2-(N(omega)-L-arginino)succinate + AMP + diphosphate + H(+). Its pathway is amino-acid biosynthesis; L-arginine biosynthesis; L-arginine from L-ornithine and carbamoyl phosphate: step 2/3. The protein is Argininosuccinate synthase of Synechococcus sp. (strain WH7803).